Consider the following 361-residue polypeptide: Probable pectinesterase 50 (361 aa).

An N-terminal signal peptide occupies residues 1-22; the sequence is MGYISMSVVAFLVVFASPVVLA. Q174 serves as a coordination point for substrate. Residue D197 is the Proton donor of the active site. D218 (nucleophile) is an active-site residue. Substrate is bound by residues R275 and W277.

Belongs to the pectinesterase family. As to expression, expressed in flower buds.

It is found in the secreted. Its subcellular location is the cell wall. The enzyme catalyses [(1-&gt;4)-alpha-D-galacturonosyl methyl ester](n) + n H2O = [(1-&gt;4)-alpha-D-galacturonosyl](n) + n methanol + n H(+). It participates in glycan metabolism; pectin degradation; 2-dehydro-3-deoxy-D-gluconate from pectin: step 1/5. In terms of biological role, acts in the modification of cell walls via demethylesterification of cell wall pectin. The chain is Probable pectinesterase 50 (PME50) from Arabidopsis thaliana (Mouse-ear cress).